Consider the following 150-residue polypeptide: Large ribosomal subunit protein uL11 (150 aa).

Belongs to the universal ribosomal protein uL11 family. In terms of assembly, part of the ribosomal stalk of the 50S ribosomal subunit. Interacts with L10 and the large rRNA to form the base of the stalk. L10 forms an elongated spine to which L12 dimers bind in a sequential fashion forming a multimeric L10(L12)X complex. Post-translationally, one or more lysine residues are methylated.

Functionally, forms part of the ribosomal stalk which helps the ribosome interact with GTP-bound translation factors. In Ureaplasma parvum serovar 3 (strain ATCC 27815 / 27 / NCTC 11736), this protein is Large ribosomal subunit protein uL11.